A 65-amino-acid polypeptide reads, in one-letter code: Hirudin-3B' (65 aa).

An interaction with thrombin active site region spans residues 1-3 (VVY). Cystine bridges form between Cys-6–Cys-14, Cys-16–Cys-28, and Cys-22–Cys-39. The interval 40-65 (VTGEGTPKPQSHNDGDFEEIPEEYLQ) is disordered. The O-linked (GalNAc...) threonine glycan is linked to Thr-45. The interval 55–65 (DFEEIPEEYLQ) is interaction with fibrinogen-binding exosite of thrombin. Acidic residues predominate over residues 55 to 65 (DFEEIPEEYLQ). Sulfotyrosine is present on Tyr-63.

The protein belongs to the protease inhibitor I14 (hirudin) family.

The protein resides in the secreted. In terms of biological role, hirudin is a potent thrombin-specific protease inhibitor. It forms a stable non-covalent complex with alpha-thrombin, thereby abolishing its ability to cleave fibrinogen. The polypeptide is Hirudin-3B' (Hirudo medicinalis (Medicinal leech)).